A 121-amino-acid chain; its full sequence is Large ribosomal subunit protein bL12 (121 aa).

This sequence belongs to the bacterial ribosomal protein bL12 family. Homodimer. Part of the ribosomal stalk of the 50S ribosomal subunit. Forms a multimeric L10(L12)X complex, where L10 forms an elongated spine to which 2 to 4 L12 dimers bind in a sequential fashion. Binds GTP-bound translation factors.

Its function is as follows. Forms part of the ribosomal stalk which helps the ribosome interact with GTP-bound translation factors. Is thus essential for accurate translation. In Pseudomonas putida (strain GB-1), this protein is Large ribosomal subunit protein bL12.